A 659-amino-acid polypeptide reads, in one-letter code: MEMTEMTSVSLKRGSVAIEDNDSVAPAEEAKRQKVSGCCPTTGQDGIENSSLPSSEKVPGPPETAEQGEKNSEVPSEEEEEEDGLSEEEEEEEEEAESFADMMKHGLTELDVGITKFVSSHQGFSGILKERYSDFVVHEIGRDGRISHLSDLSVPVDEEDPSEDVFTVLTAEEKQRLEELQLFKNKETSVAIEVIEDTKEKRTIIHQAIKSLFPGLETKTEDREGKKYIVAYHAAGKKALANPRKHSWPKSRGSYCHFVLYKENKDTMDAINLLSKYLRVKPNIFSYMGTKDKRAITVQEIAVLKITAQRLAHLNKCLMNFKLGNFSYQKNPLKLGELQGNHFTVVLRNITGTDNQVEQAMNSLKEIGFINYYGMQRFGTTAVPTYQVGRAILQNSWAEVMDLILKPRSGAEKGYLVKCREEWAKSKDPAAALRKLPVKRCVEGQLLRGLSKYGMKNIVSAFGIIPRNNRLMYIHSYQSYVWNNMVSKRIDEYGLKPVPGDLVLKGATATFIEEDDVNNYSIHDVVMPLPGFDVIYPKHKISEAYREMLTADNLDIDNMRHKIRDYSLSGAYRKIIIRPQNVSWEVVAYDDPKIPLFNTDVDNLEGRPPPVFASEGKYRALKMDFSLPPSTYATMAIREVLKMDTSIKNQTQLNTTWLR.

Met-1 carries the post-translational modification N-acetylmethionine. Composition is skewed to polar residues over residues 1–10 (MEMTEMTSVS) and 39–54 (CPTTGQDGIENSSLPS). The tract at residues 1–99 (MEMTEMTSVS…EEEEEEAESF (99 aa)) is disordered. Ser-10 carries the phosphoserine modification. Acidic residues predominate over residues 75-98 (PSEEEEEEDGLSEEEEEEEEEAES). The residue at position 125 (Ser-125) is a Phosphoserine. Asp-292 (nucleophile) is an active-site residue. The TRUD domain occupies 368 to 578 (GFINYYGMQR…SGAYRKIIIR (211 aa)).

This sequence belongs to the pseudouridine synthase TruD family. As to quaternary structure, interacts with SIRT1.

The protein localises to the nucleus. The enzyme catalyses a uridine in tRNA = a pseudouridine in tRNA. It catalyses the reaction uridine(13) in tRNA = pseudouridine(13) in tRNA. The catalysed reaction is a uridine in mRNA = a pseudouridine in mRNA. Pseudouridylate synthase that catalyzes pseudouridylation of RNAs. Acts as a regulator of protein synthesis in embryonic stem cells by mediating pseudouridylation of RNA fragments derived from tRNAs (tRFs): pseudouridylated tRFs inhibit translation by targeting the translation initiation complex. Also catalyzes pseudouridylation of mRNAs: mediates pseudouridylation of mRNAs with the consensus sequence 5'-UGUAG-3'. Acts as a regulator of pre-mRNA splicing by mediating pseudouridylation of pre-mRNAs at locations associated with alternatively spliced regions. Pseudouridylation of pre-mRNAs near splice sites directly regulates mRNA splicing and mRNA 3'-end processing. In addition to mRNAs and tRNAs, binds other types of RNAs, such as snRNAs, Y RNAs and vault RNAs, suggesting that it can catalyze pseudouridylation of many RNA types. The chain is Pseudouridylate synthase 7 homolog from Bos taurus (Bovine).